Reading from the N-terminus, the 747-residue chain is Kinesin-like protein KIF3B (747 aa).

M1 is subject to N-acetylmethionine. Position 2 is an N-acetylserine; in Kinesin-like protein KIF3B, N-terminally processed (S2). A Kinesin motor domain is found at S9–I340. An ATP-binding site is contributed by G96–T103. A coiled-coil region spans residues V346–E579. Disordered stretches follow at residues I374 to D412 and Q699 to K747. Acidic residues predominate over residues G393–D411. A globular region spans residues L580–K747. Over residues D701–N710 the composition is skewed to polar residues. Positions K711–R721 are enriched in basic residues. A compositionally biased stretch (low complexity) spans K722 to S735.

This sequence belongs to the TRAFAC class myosin-kinesin ATPase superfamily. Kinesin family. Kinesin II subfamily. As to quaternary structure, heterodimer of KIF3A and KIF3B. KIF3A/KIF3B heterodimer interacts with KIFAP3 forming a heterotrimeric (KIF3A/KIF3B/KIFAP3) complex. Interacts directly with IFT20. Interacts with the SMC3 subunit of the cohesin complex. Interacts with FLCN.

It localises to the cytoplasm. The protein resides in the cytoskeleton. It is found in the cell projection. Its subcellular location is the cilium. The protein localises to the dendritic spine. Functionally, microtubule-based molecular motor that transport intracellular cargos, such as vesicles, organelles and protein complexes. Uses ATP hydrolysis to generate force to bind and move along the microtubule. Plays a role in cilia formation. Involved in photoreceptor integrity and opsin trafficking in rod photoreceptors. Transports vesicles containing N-methyl-D-aspartate (NMDA) receptor subunit GRIN2A into neuronal dendrites. The protein is Kinesin-like protein KIF3B (KIF3B) of Homo sapiens (Human).